The sequence spans 295 residues: MPSLTHVEPIEKLSDAVTRILGHNPGPFTLQGTNTYLLGTGAKKILVDTGEPNVTEYISALKSVLASTNSHIEYIVITHWHGDHVGGIDNITDEILDKKKIPIYKMKRDKDEGVERFHYVDDGFEVAVDGATLKLIATPGHTADHFSLWLQEERALFSGDCILGEGTTVFEDLHDYMTSLQKIKDLNATRIYPGHGPVIDKVVEKVDEYIEHRMKREREIIKVLKEHEEITSMDVTNQVYADSPWAVRLAALNNVKLVLKKLCKDGVVENPHFETFKWIGGSSSGEEKKNESSNL.

Zn(2+) is bound by residues His-79, His-81, Asp-83, His-84, His-141, Asp-160, and His-195.

Belongs to the metallo-beta-lactamase superfamily. Glyoxalase II family.

The sequence is that of Beta-lactamase-like protein 2 homolog from Caenorhabditis elegans.